Consider the following 695-residue polypeptide: NADPH--cytochrome P450 reductase (695 aa).

Topologically, residues 1–8 are lumenal; it reads MAQLDTLD. The chain crosses the membrane as a helical span at residues 9–31; it reads IVVLVVLLVGSVAYFTKGSYWAV. The Cytoplasmic portion of the chain corresponds to 32-695; the sequence is PKDPYAAANS…SGSYQEDVWS (664 aa). Positions 66 to 221 constitute a Flavodoxin-like domain; that stretch reads CVIFYGSQTG…DFLAWKEPMW (156 aa). FMN-binding positions include 72 to 77, 123 to 126, 169 to 178, and aspartate 204; these read SQTGTA, ATYG, and LGNNTYEHYN. The FAD-binding FR-type domain occupies 277 to 538; the sequence is HNPYIAPIVE…HVRHSNFKLP (262 aa). Arginine 296 is an NADP(+) binding site. Residues 451-454, 469-471, and 486-489 each bind FAD; these read RYYS, TAV, and GVTT. NADP(+) contacts are provided by residues threonine 552, 614 to 615, 620 to 624, and glutamate 656; these read SR and KVYVQ. Position 694 (tryptophan 694) interacts with FAD.

It belongs to the NADPH--cytochrome P450 reductase family. The protein in the N-terminal section; belongs to the flavodoxin family. In the C-terminal section; belongs to the flavoprotein pyridine nucleotide cytochrome reductase family. FAD is required as a cofactor. It depends on FMN as a cofactor.

The protein resides in the endoplasmic reticulum membrane. It localises to the mitochondrion outer membrane. It is found in the cell membrane. The catalysed reaction is 2 oxidized [cytochrome P450] + NADPH = 2 reduced [cytochrome P450] + NADP(+) + H(+). In terms of biological role, this enzyme is required for electron transfer from NADP to cytochrome P450 in microsomes. It can also provide electron transfer to heme oxygenase and cytochrome B5. Involved in ergosterol biosynthesis. The polypeptide is NADPH--cytochrome P450 reductase (Aspergillus fumigatus (strain ATCC MYA-4609 / CBS 101355 / FGSC A1100 / Af293) (Neosartorya fumigata)).